Here is a 119-residue protein sequence, read N- to C-terminus: Ribonuclease P protein component (119 aa).

The protein belongs to the RnpA family. Consists of a catalytic RNA component (M1 or rnpB) and a protein subunit.

The catalysed reaction is Endonucleolytic cleavage of RNA, removing 5'-extranucleotides from tRNA precursor.. RNaseP catalyzes the removal of the 5'-leader sequence from pre-tRNA to produce the mature 5'-terminus. It can also cleave other RNA substrates such as 4.5S RNA. The protein component plays an auxiliary but essential role in vivo by binding to the 5'-leader sequence and broadening the substrate specificity of the ribozyme. The polypeptide is Ribonuclease P protein component (Salmonella schwarzengrund (strain CVM19633)).